Here is a 329-residue protein sequence, read N- to C-terminus: Tetraacyldisaccharide 4'-kinase (329 aa).

Position 58–65 (58–65 (SVGGTGKT)) interacts with ATP.

It belongs to the LpxK family.

The enzyme catalyses a lipid A disaccharide + ATP = a lipid IVA + ADP + H(+). The protein operates within glycolipid biosynthesis; lipid IV(A) biosynthesis; lipid IV(A) from (3R)-3-hydroxytetradecanoyl-[acyl-carrier-protein] and UDP-N-acetyl-alpha-D-glucosamine: step 6/6. Transfers the gamma-phosphate of ATP to the 4'-position of a tetraacyldisaccharide 1-phosphate intermediate (termed DS-1-P) to form tetraacyldisaccharide 1,4'-bis-phosphate (lipid IVA). The polypeptide is Tetraacyldisaccharide 4'-kinase (Idiomarina loihiensis (strain ATCC BAA-735 / DSM 15497 / L2-TR)).